Reading from the N-terminus, the 1182-residue chain is Phosphatidylinositol 3-kinase age-1 (1182 aa).

The segment covering 1–16 (MSMGRSPSTTFRSRTG) has biased composition (polar residues). Residues 1-24 (MSMGRSPSTTFRSRTGSHGARDLI) are disordered. The PI3K-ABD domain occupies 74 to 174 (NEGVADIITM…FPMLFLYQPD (101 aa)). The PI3K-RBD domain maps to 266–358 (KRKAEINGVC…YRCPGFVVRR (93 aa)). The C2 PI3K-type domain occupies 425-577 (LDANLMIRPV…SSYGGRVRMP (153 aa)). The PIK helical domain occupies 601-788 (DDYESCIRDP…SLLMEAYLRG (188 aa)). The 316-residue stretch at 853 to 1168 (IIDKAIVLGS…IYEEAFNGSW (316 aa)) folds into the PI3K/PI4K catalytic domain. Residues 859–865 (VLGSAKR) are G-loop. The interval 1028-1036 (GIKDRHSDN) is catalytic loop. The tract at residues 1047–1073 (HIDFGHILGHGKTKLGIQRDRQPFILT) is activation loop.

This sequence belongs to the PI3/PI4-kinase family.

It catalyses the reaction a 1,2-diacyl-sn-glycero-3-phospho-(1D-myo-inositol) + ATP = a 1,2-diacyl-sn-glycero-3-phospho-(1D-myo-inositol-3-phosphate) + ADP + H(+). Its function is as follows. Phosphatidylinositol 3-kinase homolog that regulates longevity and diapause. Promotes cell survival during embryonic development by recruiting akt-1/2 to the plasma membrane through the production of PtdIns(3,4,5)P3. Could function in the development or neuroendocrine signaling of the dauer pathway. Mediates susceptibility to enteropathogenic E.coli infection. May negatively regulate AYI interneuron neurite outgrowth. Plays a role in aversive olfactory learning when an odor is associated with food deprivation. Regulates this process by promoting the nuclear relocalization of egl-4 in AWC olfactory neurons after odor conditioning. The protein is Phosphatidylinositol 3-kinase age-1 of Caenorhabditis elegans.